Here is a 37-residue protein sequence, read N- to C-terminus: Large ribosomal subunit protein bL36 (37 aa).

It belongs to the bacterial ribosomal protein bL36 family.

The polypeptide is Large ribosomal subunit protein bL36 (rpmJ) (Mycoplasma sp).